We begin with the raw amino-acid sequence, 1414 residues long: DNA-directed RNA polymerase subunit beta' (1414 aa).

Zn(2+) is bound by residues C70, C72, C85, and C88. Mg(2+) is bound by residues D460, D462, and D464. Zn(2+)-binding residues include C815, C889, C896, and C899. The segment at 1395–1414 (EAEAQFADISSTPDSDTDAS) is disordered.

Belongs to the RNA polymerase beta' chain family. The RNAP catalytic core consists of 2 alpha, 1 beta, 1 beta' and 1 omega subunit. When a sigma factor is associated with the core the holoenzyme is formed, which can initiate transcription. Requires Mg(2+) as cofactor. Zn(2+) is required as a cofactor.

It carries out the reaction RNA(n) + a ribonucleoside 5'-triphosphate = RNA(n+1) + diphosphate. Functionally, DNA-dependent RNA polymerase catalyzes the transcription of DNA into RNA using the four ribonucleoside triphosphates as substrates. The protein is DNA-directed RNA polymerase subunit beta' of Herminiimonas arsenicoxydans.